The chain runs to 278 residues: Sulfur carrier protein FdhD (278 aa).

Cysteine 121 serves as the catalytic Cysteine persulfide intermediate. 260 to 265 (FCKPGR) is a Mo-bis(molybdopterin guanine dinucleotide) binding site.

Belongs to the FdhD family.

The protein localises to the cytoplasm. Functionally, required for formate dehydrogenase (FDH) activity. Acts as a sulfur carrier protein that transfers sulfur from IscS to the molybdenum cofactor prior to its insertion into FDH. This chain is Sulfur carrier protein FdhD, found in Salmonella agona (strain SL483).